A 150-amino-acid polypeptide reads, in one-letter code: D-aminoacyl-tRNA deacylase (150 aa).

The Gly-cisPro motif, important for rejection of L-amino acids signature appears at 137 to 138; that stretch reads GP.

Belongs to the DTD family. As to quaternary structure, homodimer.

It is found in the cytoplasm. It carries out the reaction glycyl-tRNA(Ala) + H2O = tRNA(Ala) + glycine + H(+). It catalyses the reaction a D-aminoacyl-tRNA + H2O = a tRNA + a D-alpha-amino acid + H(+). In terms of biological role, an aminoacyl-tRNA editing enzyme that deacylates mischarged D-aminoacyl-tRNAs. Also deacylates mischarged glycyl-tRNA(Ala), protecting cells against glycine mischarging by AlaRS. Acts via tRNA-based rather than protein-based catalysis; rejects L-amino acids rather than detecting D-amino acids in the active site. By recycling D-aminoacyl-tRNA to D-amino acids and free tRNA molecules, this enzyme counteracts the toxicity associated with the formation of D-aminoacyl-tRNA entities in vivo and helps enforce protein L-homochirality. In Geotalea daltonii (strain DSM 22248 / JCM 15807 / FRC-32) (Geobacter daltonii), this protein is D-aminoacyl-tRNA deacylase.